The sequence spans 299 residues: Phosphate import ATP-binding protein PstB 1 (299 aa).

A disordered region spans residues M1–K51. The segment covering D10–P27 has biased composition (low complexity). The region spanning I54–I294 is the ABC transporter domain. G86–S93 contacts ATP.

This sequence belongs to the ABC transporter superfamily. Phosphate importer (TC 3.A.1.7) family. The complex is composed of two ATP-binding proteins (PstB), two transmembrane proteins (PstC and PstA) and a solute-binding protein (PstS).

It is found in the cell membrane. The enzyme catalyses phosphate(out) + ATP + H2O = ADP + 2 phosphate(in) + H(+). In terms of biological role, part of the ABC transporter complex PstSACB involved in phosphate import. Responsible for energy coupling to the transport system. The polypeptide is Phosphate import ATP-binding protein PstB 1 (Haloarcula marismortui (strain ATCC 43049 / DSM 3752 / JCM 8966 / VKM B-1809) (Halobacterium marismortui)).